A 453-amino-acid polypeptide reads, in one-letter code: MLEKAEKQRRAGSGQQRAAGYMPGFGNDFETESLPGALPQGQNSPQKCNYGLYAEQLSGSPFTAPRGTNERSWLYRIRPSVRHTGRFRRVDYPHWKTAPHVGEHSLALGQLRWSPLPAPSEALDFLQGIRTMTTAGDALTQAGMAAHAYAFNADMVDDYFFNADGELLIVPETGAIQVFTELGRMDVEPSEICLIPRGMMFKVTRLGEEKVWRGYICENYGAKFTLPDRGPIGANCLANPRDFKTPVAAYEDKETPCRVQVKWCGSFHMVEIGHSPLDVVAWHGNYAPYKYDLKTFSPVGAILFDHPDPSIFTVLTAPSGEEGTANVDFVIFPPRWLVAEHTFRPPWYHRNIMSEFMGLIYGRYDAKEEGFVPGGMSLHNMMLAHGPDFSGFEKASNGELKPVKLDNTMAFMFETRFPQQLTTFAAELDTLQDDYMDCWSGLERKFDGTPGIK.

The interval 1–42 (MLEKAEKQRRAGSGQQRAAGYMPGFGNDFETESLPGALPQGQ) is disordered. The active-site Proton acceptor is the H306. 2 residues coordinate Fe cation: H349 and E355. Homogentisate is bound by residues Y364 and H385. Position 385 (H385) interacts with Fe cation.

This sequence belongs to the homogentisate dioxygenase family. In terms of assembly, hexamer; dimer of trimers. Fe cation is required as a cofactor.

The catalysed reaction is homogentisate + O2 = 4-maleylacetoacetate + H(+). Its pathway is amino-acid degradation; L-phenylalanine degradation; acetoacetate and fumarate from L-phenylalanine: step 4/6. Its function is as follows. Involved in the catabolism of homogentisate (2,5-dihydroxyphenylacetate or 2,5-OH-PhAc), a central intermediate in the degradation of phenylalanine and tyrosine. Catalyzes the oxidative ring cleavage of the aromatic ring of homogentisate to yield maleylacetoacetate. The polypeptide is Homogentisate 1,2-dioxygenase (Rhizobium meliloti (strain 1021) (Ensifer meliloti)).